A 196-amino-acid chain; its full sequence is DnaA initiator-associating protein DiaA (196 aa).

Residues 34–196 (LVQSLLNGNK…DNTLFPHQDD (163 aa)) form the SIS domain.

It belongs to the SIS family. DiaA subfamily. As to quaternary structure, homotetramer; dimer of dimers.

In terms of biological role, required for the timely initiation of chromosomal replication via direct interactions with the DnaA initiator protein. This Shigella boydii serotype 18 (strain CDC 3083-94 / BS512) protein is DnaA initiator-associating protein DiaA.